Consider the following 152-residue polypeptide: UPF0178 protein YaiI (152 aa).

This sequence belongs to the UPF0178 family.

This Escherichia coli O81 (strain ED1a) protein is UPF0178 protein YaiI.